Reading from the N-terminus, the 401-residue chain is Probable tRNA sulfurtransferase (401 aa).

A THUMP domain is found at 60–165; it reads EPIIEKLKTV…QDGTYVTCRD (106 aa). ATP-binding positions include 183 to 184, 208 to 209, arginine 265, glycine 287, and glutamine 296; these read ML and HF.

The protein belongs to the ThiI family.

It is found in the cytoplasm. The catalysed reaction is [ThiI sulfur-carrier protein]-S-sulfanyl-L-cysteine + a uridine in tRNA + 2 reduced [2Fe-2S]-[ferredoxin] + ATP + H(+) = [ThiI sulfur-carrier protein]-L-cysteine + a 4-thiouridine in tRNA + 2 oxidized [2Fe-2S]-[ferredoxin] + AMP + diphosphate. The enzyme catalyses [ThiS sulfur-carrier protein]-C-terminal Gly-Gly-AMP + S-sulfanyl-L-cysteinyl-[cysteine desulfurase] + AH2 = [ThiS sulfur-carrier protein]-C-terminal-Gly-aminoethanethioate + L-cysteinyl-[cysteine desulfurase] + A + AMP + 2 H(+). The protein operates within cofactor biosynthesis; thiamine diphosphate biosynthesis. Catalyzes the ATP-dependent transfer of a sulfur to tRNA to produce 4-thiouridine in position 8 of tRNAs, which functions as a near-UV photosensor. Also catalyzes the transfer of sulfur to the sulfur carrier protein ThiS, forming ThiS-thiocarboxylate. This is a step in the synthesis of thiazole, in the thiamine biosynthesis pathway. The sulfur is donated as persulfide by IscS. This Geobacillus kaustophilus (strain HTA426) protein is Probable tRNA sulfurtransferase.